A 62-amino-acid chain; its full sequence is Ubiquinol-cytochrome c reductase complex 6.7 kDa protein (62 aa).

The Mitochondrial matrix portion of the chain corresponds to 2 to 25; it reads TSPAAAGNGLFKFLRPKLRPQSTD. Residues 26–44 traverse the membrane as a helical segment; that stretch reads IQAAAGWGVAAVTGALWVI. Residues 45–62 are Mitochondrial intermembrane-facing; the sequence is QPWDFLRKTFIEKQEEEK.

This sequence belongs to the UQCR11/QCR10 family. Component of the ubiquinol-cytochrome c oxidoreductase (cytochrome b-c1 complex, complex III, CIII), a multisubunit enzyme composed of 3 respiratory subunits cytochrome b, cytochrome c1 and Rieske protein, 2 core protein subunits, and additional low-molecular weight protein subunits. The complex exists as an obligatory dimer and forms supercomplexes (SCs) in the inner mitochondrial membrane with cytochrome c oxidase (complex IV, CIV).

It localises to the mitochondrion inner membrane. Its function is as follows. Component of the ubiquinol-cytochrome c oxidoreductase, a multisubunit transmembrane complex that is part of the mitochondrial electron transport chain which drives oxidative phosphorylation. The respiratory chain contains 3 multisubunit complexes succinate dehydrogenase (complex II, CII), ubiquinol-cytochrome c oxidoreductase (cytochrome b-c1 complex, complex III, CIII) and cytochrome c oxidase (complex IV, CIV), that cooperate to transfer electrons derived from NADH and succinate to molecular oxygen, creating an electrochemical gradient over the inner membrane that drives transmembrane transport and the ATP synthase. The cytochrome b-c1 complex catalyzes electron transfer from ubiquinol to cytochrome c, linking this redox reaction to translocation of protons across the mitochondrial inner membrane, with protons being carried across the membrane as hydrogens on the quinol. In the process called Q cycle, 2 protons are consumed from the matrix, 4 protons are released into the intermembrane space and 2 electrons are passed to cytochrome c. QCR10 has a role in CIII assembly and RIP1 stability. In Solanum tuberosum (Potato), this protein is Ubiquinol-cytochrome c reductase complex 6.7 kDa protein.